A 262-amino-acid chain; its full sequence is MKTLIKRLQDQQDIWKRIEIVGDIVIIGVPFNKKPEDLVEIANEILSTFPYVKSVWGRHRDVNGTYRLSTYVHLAGEKRSETVYKEHKCKYFLDFTKVFFSEKLSYEHLRVATQVKRDEIIINMFSGFGPFSILSAVLGRPKIVYSIDLNPYAYYYMMVNVELNKAYEVLPIYGDAFKRIYELEDADRIIAPLPELADKAYEVALQKVKKGGIIHLYTEVETNKGEDPVRIAMNKYRGSYFGRIVRSVNPHKYHVVVDIKAN.

S-adenosyl-L-methionine contacts are provided by residues H108, F125, 148 to 149 (DL), and 175 to 176 (DA).

Belongs to the class I-like SAM-binding methyltransferase superfamily. TRM5/TYW2 family.

It localises to the cytoplasm. It catalyses the reaction 4-demethylwyosine(37) in tRNA(Phe) + S-adenosyl-L-methionine = isowyosine(37) in tRNA(Phe) + S-adenosyl-L-homocysteine + H(+). In terms of biological role, catalyzes the C7-methylation of 4-demethylwyosine (imG-14) at position 37 in tRNA(Phe). This is tRNA 4-demethylwyosine(37)-methyltransferase Taw21 from Saccharolobus solfataricus (strain ATCC 35092 / DSM 1617 / JCM 11322 / P2) (Sulfolobus solfataricus).